The chain runs to 477 residues: Ribulose bisphosphate carboxylase large chain (477 aa).

The propeptide occupies 1-2 (MS). Proline 3 carries the N-acetylproline modification. Position 14 is an N6,N6,N6-trimethyllysine (lysine 14). The substrate site is built by asparagine 123 and threonine 173. The active-site Proton acceptor is lysine 175. Lysine 177 provides a ligand contact to substrate. Mg(2+) contacts are provided by lysine 201, aspartate 203, and glutamate 204. At lysine 201 the chain carries N6-carboxylysine. Histidine 294 acts as the Proton acceptor in catalysis. The substrate site is built by arginine 295, histidine 327, and serine 379.

Belongs to the RuBisCO large chain family. Type I subfamily. In terms of assembly, heterohexadecamer of 8 large chains and 8 small chains; disulfide-linked. The disulfide link is formed within the large subunit homodimers. Requires Mg(2+) as cofactor. In terms of processing, the disulfide bond which can form in the large chain dimeric partners within the hexadecamer appears to be associated with oxidative stress and protein turnover.

The protein localises to the plastid. Its subcellular location is the chloroplast. The catalysed reaction is 2 (2R)-3-phosphoglycerate + 2 H(+) = D-ribulose 1,5-bisphosphate + CO2 + H2O. It carries out the reaction D-ribulose 1,5-bisphosphate + O2 = 2-phosphoglycolate + (2R)-3-phosphoglycerate + 2 H(+). RuBisCO catalyzes two reactions: the carboxylation of D-ribulose 1,5-bisphosphate, the primary event in carbon dioxide fixation, as well as the oxidative fragmentation of the pentose substrate in the photorespiration process. Both reactions occur simultaneously and in competition at the same active site. The protein is Ribulose bisphosphate carboxylase large chain of Nicotiana sylvestris (Wood tobacco).